Reading from the N-terminus, the 120-residue chain is U13-lycotoxin-Ls1a (120 aa).

Positions 1–16 are cleaved as a signal peptide; sequence MKILFVLISILYAVYC. Positions 17-54 are excised as a propeptide; sequence FSSEEDVDSAYLANELEPVEDINSEQYAALEPKEEQER. 4 disulfides stabilise this stretch: cysteine 56-cysteine 70, cysteine 63-cysteine 76, cysteine 69-cysteine 87, and cysteine 78-cysteine 85. Positions 56–95 constitute an Agouti domain; sequence CADMGQDCKDDCDCCLNIATCNCWFGRYFCSCTFGDYQTC.

The protein belongs to the neurotoxin 05 (agouti) family. In terms of processing, contains 6 disulfide bonds. As to expression, expressed by the venom gland.

The protein resides in the secreted. The sequence is that of U13-lycotoxin-Ls1a from Lycosa singoriensis (Wolf spider).